Reading from the N-terminus, the 282-residue chain is MRGARLTGALLALAGLLQVALSLRIAAFNIRTFGETKMSNDTLSNYIVQILNRYDIALIQEVRDSHLTAVGKLLDRLNQDDPNTYHFVVSEPLGRNNYKERYLFVFRPDQVSLLDSYQYNDGCEPCGNDTFSREPAIVKFSSPFTQVKEFAIVPLHAAPSDALAEIDSLYDVYLDVQQKWDMEDIMLMGDFNAGCSYVTSSQWPSIRLRRNPAFWWLIPDTADTTVKSTHCAYDRIVVAGTLLQEAVVPDSAVPFDFQAAYGLNDQTAEAISDHYPVEVTLM.

Positions 1 to 22 (MRGARLTGALLALAGLLQVALS) are cleaved as a signal peptide. Asparagine 40 is a glycosylation site (N-linked (GlcNAc...) asparagine). Residue glutamate 100 is part of the active site. A disulfide bridge connects residues cysteine 123 and cysteine 126. The N-linked (GlcNAc...) asparagine glycan is linked to asparagine 128. Histidine 156 is an active-site residue. Cysteine 195 and cysteine 231 form a disulfide bridge.

Belongs to the DNase I family. Requires Ca(2+) as cofactor. Mg(2+) is required as a cofactor.

The protein resides in the secreted. The protein localises to the zymogen granule. Its subcellular location is the nucleus envelope. The catalysed reaction is Endonucleolytic cleavage to 5'-phosphodinucleotide and 5'-phosphooligonucleotide end-products.. Functionally, serum endocuclease secreted into body fluids by a wide variety of exocrine and endocrine organs. Expressed by non-hematopoietic tissues and preferentially cleaves protein-free DNA. Among other functions, seems to be involved in cell death by apoptosis. Binds specifically to G-actin and blocks actin polymerization. Together with DNASE1L3, plays a key role in degrading neutrophil extracellular traps (NETs). NETs are mainly composed of DNA fibers and are released by neutrophils to bind pathogens during inflammation. Degradation of intravascular NETs by DNASE1 and DNASE1L3 is required to prevent formation of clots that obstruct blood vessels and cause organ damage following inflammation. The protein is Deoxyribonuclease-1 (DNASE1) of Equus caballus (Horse).